A 308-amino-acid polypeptide reads, in one-letter code: MNKELQPKVIFLMGPTASGKTALALELAEKHNCEIISVDSALIYRGMDIGSAKPSADELARGPHRLIDIRDPSESYSAADFRADAITEIEQIISMGKTPVLVGGTMMYFKALLEGLSPLPSADEAIRAEIQAEADEKGWEALHDQLREIDPVSAERIHPNDPQRLSRALEVYRISGKSMTELTQTKSAPLPYDVVQFAIAPRERKVLHDLIAQRFAIMLKQGFLEEVTELKARGDLHLDLPSMRCVGYRQCWQYLDGEFDYDTMVEKAVAATRQLAKRQLTWLRSWPELNWLESGAEGNLVTLMRQCR.

Residue glycine 14–threonine 21 coordinates ATP. Residue threonine 16–threonine 21 coordinates substrate. 3 interaction with substrate tRNA regions span residues aspartate 39 to leucine 42, glutamine 163 to arginine 167, and arginine 244 to arginine 249.

This sequence belongs to the IPP transferase family. Monomer. Mg(2+) serves as cofactor.

The enzyme catalyses adenosine(37) in tRNA + dimethylallyl diphosphate = N(6)-dimethylallyladenosine(37) in tRNA + diphosphate. Functionally, catalyzes the transfer of a dimethylallyl group onto the adenine at position 37 in tRNAs that read codons beginning with uridine, leading to the formation of N6-(dimethylallyl)adenosine (i(6)A). The protein is tRNA dimethylallyltransferase of Shewanella baltica (strain OS185).